We begin with the raw amino-acid sequence, 632 residues long: tRNA uridine 5-carboxymethylaminomethyl modification enzyme MnmG (632 aa).

FAD-binding positions include Gly15 to Gly20, Ile127, and Ser182. Residue Gly276–Phe290 coordinates NAD(+). Residue Gln373 participates in FAD binding.

The protein belongs to the MnmG family. Homodimer. Heterotetramer of two MnmE and two MnmG subunits. Requires FAD as cofactor.

The protein resides in the cytoplasm. Its function is as follows. NAD-binding protein involved in the addition of a carboxymethylaminomethyl (cmnm) group at the wobble position (U34) of certain tRNAs, forming tRNA-cmnm(5)s(2)U34. The polypeptide is tRNA uridine 5-carboxymethylaminomethyl modification enzyme MnmG (Streptococcus pyogenes serotype M3 (strain SSI-1)).